Consider the following 401-residue polypeptide: Patatin-like protein 4 (401 aa).

The PNPLA domain occupies 17-218 (LSLDGGGVRG…TANDPTLVGM (202 aa)). The GXGXXG signature appears at 21–26 (GGGVRG). The short motif at 60–64 (GTSTG) is the GXSXG element. Serine 62 serves as the catalytic Nucleophile. Aspartate 205 (proton acceptor) is an active-site residue. The DGA/G motif lies at 205-207 (DGG).

It belongs to the patatin family.

Possesses non-specific lipolytic acyl hydrolase (LAH) activity. Hydrolyzes phospholipids as well as galactolipids. May play a role in disease resistance. The protein is Patatin-like protein 4 (PLP4) of Arabidopsis thaliana (Mouse-ear cress).